The chain runs to 203 residues: FMN-dependent NADH:quinone oxidoreductase (203 aa).

FMN-binding positions include Ser9, 15-17, and 138-141; these read SVS and SRGG.

It belongs to the azoreductase type 1 family. In terms of assembly, homodimer. Requires FMN as cofactor.

The enzyme catalyses 2 a quinone + NADH + H(+) = 2 a 1,4-benzosemiquinone + NAD(+). It catalyses the reaction N,N-dimethyl-1,4-phenylenediamine + anthranilate + 2 NAD(+) = 2-(4-dimethylaminophenyl)diazenylbenzoate + 2 NADH + 2 H(+). In terms of biological role, quinone reductase that provides resistance to thiol-specific stress caused by electrophilic quinones. Also exhibits azoreductase activity. Catalyzes the reductive cleavage of the azo bond in aromatic azo compounds to the corresponding amines. The chain is FMN-dependent NADH:quinone oxidoreductase from Methylorubrum extorquens (strain CM4 / NCIMB 13688) (Methylobacterium extorquens).